The following is a 207-amino-acid chain: Melanocortin-2 receptor accessory protein 2 (207 aa).

Positions 1 to 21 (MEMSAQRLASNRTSPQSPSNS) are disordered. Positions 7–21 (RLASNRTSPQSPSNS) are enriched in polar residues. An N-linked (GlcNAc...) asparagine glycan is attached at Asn11. A helical membrane pass occupies residues 47–67 (IVIGFWVGLAVFVIFMFFVLT). Residue Ser91 is modified to Phosphoserine.

It belongs to the MRAP family. As to quaternary structure, homodimer and heterodimer. Forms antiparallel homodimers and heterodimers with MRAP. Interacts with MC1R, MC2R, MC3R and MC5R. Interacts with MC4R. In terms of tissue distribution, predominantly expressed in the brain, mainly in the pons and cerebellum but also in regions involved in energy homeostasis, such as the hypothalamus and brainstem.

Its subcellular location is the cell membrane. It localises to the endoplasmic reticulum membrane. In terms of biological role, modulator of melanocortin receptor 4 (MC4R), a receptor involved in energy homeostasis. Plays a central role in the control of energy homeostasis and body weight regulation by increasing ligand-sensitivity of MC4R and MC4R-mediated generation of cAMP. May also act as a negative regulator of MC2R: competes with MRAP for binding to MC2R and impairs the binding of corticotropin (ACTH) to MC2R. May also regulate activity of other melanocortin receptors (MC1R, MC3R and MC5R); however, additional evidence is required in vivo. The chain is Melanocortin-2 receptor accessory protein 2 (Mrap2) from Mus musculus (Mouse).